Consider the following 1159-residue polypeptide: Phosphatidylinositol 3-kinase age-1 (1159 aa).

Positions 1 to 25 (MSMGRSSSTTFRNRTASHGSRSLGS) are enriched in polar residues. Residues 1–28 (MSMGRSSSTTFRNRTASHGSRSLGSAET) form a disordered region. A PI3K-ABD domain is found at 79-179 (SEGVADMIVL…FPMLFLFEPD (101 aa)). One can recognise a PI3K-RBD domain in the interval 272 to 363 (RKSEANEVWE…YRCPGFVVRR (92 aa)). Residues 430-588 (LDSNLMIRPV…VKMPNEAQYK (159 aa)) enclose the C2 PI3K-type domain. In terms of domain architecture, PIK helical spans 607–793 (DYEACIGDPG…SLLMEAYLRG (187 aa)). Positions 858-1159 (VIEKAIVLGS…NWLFHAMKHY (302 aa)) constitute a PI3K/PI4K catalytic domain. Positions 864-870 (VLGSAKQ) are G-loop. The segment at 1028 to 1036 (GIKDRHSDN) is catalytic loop. Residues 1047–1073 (HIDFGHILGHGKTKLGIQRDRQPFILT) are activation loop.

Belongs to the PI3/PI4-kinase family.

It catalyses the reaction a 1,2-diacyl-sn-glycero-3-phospho-(1D-myo-inositol) + ATP = a 1,2-diacyl-sn-glycero-3-phospho-(1D-myo-inositol-3-phosphate) + ADP + H(+). Its function is as follows. Phosphatidylinositol 3-kinase homolog that regulates longevity and diapause. Promotes cell survival during embryonic development by recruiting akt-1/2 to the plasma membrane through the production of PtdIns(3,4,5)P3. Could function in the development or neuroendocrine signaling of the dauer pathway. Mediates susceptibility to enteropathogenic E.coli infection. May negatively regulate AYI interneuron neurite outgrowth. Plays a role in aversive olfactory learning when an odor is associated with food deprivation. Regulates this process by promoting the nuclear relocalization of egl-4 in AWC olfactory neurons after odor conditioning. The protein is Phosphatidylinositol 3-kinase age-1 (age-1) of Caenorhabditis briggsae.